We begin with the raw amino-acid sequence, 92 residues long: Ig kappa chain V region 3381 (92 aa).

Positions 1–23 are framework-1; it reads AFELTQTPASVEAAVGGTVTINC. The interval 24–34 is complementarity-determining-1; that stretch reads QASESISNWLA. The segment at 35–49 is framework-2; sequence WYQQKPGQPXKLLIY. A complementarity-determining-2 region spans residues 50–56; that stretch reads KASTLAS. The tract at residues 57-88 is framework-3; the sequence is GVSSRFKGSGSGTQFTLTISDLECADAATYYC. Residues 89-92 form a complementarity-determining-3 region; the sequence is QSTD.

In Oryctolagus cuniculus (Rabbit), this protein is Ig kappa chain V region 3381.